Reading from the N-terminus, the 376-residue chain is UDP-N-acetylglucosamine--N-acetylmuramyl-(pentapeptide) pyrophosphoryl-undecaprenol N-acetylglucosamine transferase (376 aa).

Residues 11-13 (TGG), Asn-117, Arg-160, Ser-208, and Gln-310 contribute to the UDP-N-acetyl-alpha-D-glucosamine site.

This sequence belongs to the glycosyltransferase 28 family. MurG subfamily.

The protein resides in the cell inner membrane. It catalyses the reaction di-trans,octa-cis-undecaprenyl diphospho-N-acetyl-alpha-D-muramoyl-L-alanyl-D-glutamyl-meso-2,6-diaminopimeloyl-D-alanyl-D-alanine + UDP-N-acetyl-alpha-D-glucosamine = di-trans,octa-cis-undecaprenyl diphospho-[N-acetyl-alpha-D-glucosaminyl-(1-&gt;4)]-N-acetyl-alpha-D-muramoyl-L-alanyl-D-glutamyl-meso-2,6-diaminopimeloyl-D-alanyl-D-alanine + UDP + H(+). It participates in cell wall biogenesis; peptidoglycan biosynthesis. Cell wall formation. Catalyzes the transfer of a GlcNAc subunit on undecaprenyl-pyrophosphoryl-MurNAc-pentapeptide (lipid intermediate I) to form undecaprenyl-pyrophosphoryl-MurNAc-(pentapeptide)GlcNAc (lipid intermediate II). This chain is UDP-N-acetylglucosamine--N-acetylmuramyl-(pentapeptide) pyrophosphoryl-undecaprenol N-acetylglucosamine transferase, found in Rickettsia massiliae (strain Mtu5).